Reading from the N-terminus, the 426-residue chain is Glutamate-1-semialdehyde 2,1-aminomutase (426 aa).

An N6-(pyridoxal phosphate)lysine modification is found at Lys-265.

This sequence belongs to the class-III pyridoxal-phosphate-dependent aminotransferase family. HemL subfamily. Homodimer. Pyridoxal 5'-phosphate serves as cofactor.

It is found in the cytoplasm. It carries out the reaction (S)-4-amino-5-oxopentanoate = 5-aminolevulinate. Its pathway is porphyrin-containing compound metabolism; protoporphyrin-IX biosynthesis; 5-aminolevulinate from L-glutamyl-tRNA(Glu): step 2/2. The chain is Glutamate-1-semialdehyde 2,1-aminomutase from Salmonella arizonae (strain ATCC BAA-731 / CDC346-86 / RSK2980).